Here is a 382-residue protein sequence, read N- to C-terminus: Pentatricopeptide repeat-containing protein 2, mitochondrial (382 aa).

A PPR repeat occupies 159–193 (TSFNILMDMLFTKGQYERAVEVLVEMRNQRVRFSK).

Belongs to the PTCD2 family.

It localises to the mitochondrion. Functionally, may be involved in mitochondrial RNA maturation and mitochondrial respiratory chain function. This Xenopus laevis (African clawed frog) protein is Pentatricopeptide repeat-containing protein 2, mitochondrial (ptcd2).